We begin with the raw amino-acid sequence, 393 residues long: Chorismate synthase (393 aa).

Residues Arg40 and Arg46 each contribute to the NADP(+) site. FMN is bound by residues 129-131 (RSS), 249-250 (QA), Gly301, 316-320 (KPIPT), and Arg342.

This sequence belongs to the chorismate synthase family. Homotetramer. FMNH2 serves as cofactor.

It carries out the reaction 5-O-(1-carboxyvinyl)-3-phosphoshikimate = chorismate + phosphate. It functions in the pathway metabolic intermediate biosynthesis; chorismate biosynthesis; chorismate from D-erythrose 4-phosphate and phosphoenolpyruvate: step 7/7. Its function is as follows. Catalyzes the anti-1,4-elimination of the C-3 phosphate and the C-6 proR hydrogen from 5-enolpyruvylshikimate-3-phosphate (EPSP) to yield chorismate, which is the branch point compound that serves as the starting substrate for the three terminal pathways of aromatic amino acid biosynthesis. This reaction introduces a second double bond into the aromatic ring system. The sequence is that of Chorismate synthase from Pelobacter propionicus (strain DSM 2379 / NBRC 103807 / OttBd1).